The primary structure comprises 1391 residues: DNA-directed RNA polymerase subunit beta (1391 aa).

The protein belongs to the RNA polymerase beta chain family. As to quaternary structure, the RNAP catalytic core consists of 2 alpha, 1 beta, 1 beta' and 1 omega subunit. When a sigma factor is associated with the core the holoenzyme is formed, which can initiate transcription.

The catalysed reaction is RNA(n) + a ribonucleoside 5'-triphosphate = RNA(n+1) + diphosphate. Its function is as follows. DNA-dependent RNA polymerase catalyzes the transcription of DNA into RNA using the four ribonucleoside triphosphates as substrates. In Granulibacter bethesdensis (strain ATCC BAA-1260 / CGDNIH1), this protein is DNA-directed RNA polymerase subunit beta.